Consider the following 166-residue polypeptide: Large ribosomal subunit protein uL10 (166 aa).

It belongs to the universal ribosomal protein uL10 family. As to quaternary structure, part of the ribosomal stalk of the 50S ribosomal subunit. The N-terminus interacts with L11 and the large rRNA to form the base of the stalk. The C-terminus forms an elongated spine to which L12 dimers bind in a sequential fashion forming a multimeric L10(L12)X complex.

Functionally, forms part of the ribosomal stalk, playing a central role in the interaction of the ribosome with GTP-bound translation factors. This is Large ribosomal subunit protein uL10 from Mesoplasma florum (strain ATCC 33453 / NBRC 100688 / NCTC 11704 / L1) (Acholeplasma florum).